A 1408-amino-acid polypeptide reads, in one-letter code: ABC multidrug transporter MDR1 (1408 aa).

Polar residues predominate over residues 79–88 (IAASSDTLRN). A disordered region spans residues 79–102 (IAASSDTLRNSPLEKPISNAFSKS). The next 2 membrane-spanning stretches (helical) occupy residues 147–167 (FAAP…VAAG) and 223–243 (LYLM…MFIW). The 308-residue stretch at 157-464 (VLGLVLAVAA…LAPELAAVTK (308 aa)) folds into the ABC transmembrane type-1 1 domain. An N-linked (GlcNAc...) asparagine glycan is attached at asparagine 244. The next 4 helical transmembrane spans lie at 296–316 (KVAL…LAFV), 321–341 (LAGA…IMMT), 408–428 (IMFF…GILV), and 436–456 (GIVI…AMLA). The ABC transporter 1 domain maps to 499–744 (ISFENVKFHY…ENGPYAQLVN (246 aa)). 534–541 (GASGSGKS) is a binding site for ATP. N-linked (GlcNAc...) asparagine glycosylation is present at asparagine 606. 2 helical membrane passes run 838–858 (IIAF…AILF) and 882–902 (LWYF…SAGF). Residues 838–1125 (IIAFIAAICA…VFTFVPDASK (288 aa)) enclose the ABC transmembrane type-1 2 domain. Asparagine 934 carries an N-linked (GlcNAc...) asparagine glycan. Helical transmembrane passes span 952-972 (GLFG…IGGC), 981-999 (LLAL…GGYI), 1072-1092 (GLTF…IIDA), and 1099-1119 (FYTV…VFTF). 2 N-linked (GlcNAc...) asparagine glycosylation sites follow: asparagine 1127 and asparagine 1182. Positions 1162–1402 (VRIEGVHFRY…KGGYYELVQM (241 aa)) constitute an ABC transporter 2 domain. ATP is bound at residue 1197–1204 (GPSGCGKS). The N-linked (GlcNAc...) asparagine glycan is linked to asparagine 1404.

Belongs to the ABC transporter superfamily. ABCB family. Multidrug resistance exporter (TC 3.A.1.201) subfamily.

Its subcellular location is the cell membrane. The enzyme catalyses itraconazole(in) + ATP + H2O = itraconazole(out) + ADP + phosphate + H(+). The catalysed reaction is voriconazole(in) + ATP + H2O = voriconazole(out) + ADP + phosphate + H(+). It catalyses the reaction fluconazole(in) + ATP + H2O = fluconazole(out) + ADP + phosphate + H(+). Pleiotropic ABC efflux transporter that confers resistance to structurally and functionally unrelated compounds including azoles such as fluconazole (FLC), itraconazole (ITC), posaconazole (POS), and voriconazole (VRC). In Cryptococcus neoformans var. grubii serotype A (strain H99 / ATCC 208821 / CBS 10515 / FGSC 9487) (Filobasidiella neoformans var. grubii), this protein is ABC multidrug transporter MDR1.